The chain runs to 2602 residues: Non-reducing polyketide synthase SAT8 (2602 aa).

Cys130 functions as the Nucleophile; for transacylase activity in the catalytic mechanism. His249 functions as the Proton donor/acceptor; for transacylase activity in the catalytic mechanism. The tract at residues 379-398 (MLENSTSPPSPAATSSNSHC) is disordered. Over residues 382 to 396 (NSTSPPSPAATSSNS) the composition is skewed to low complexity. Positions 404-822 (PRDIAIVGMS…GSNAAMVVTQ (419 aa)) constitute a Ketosynthase family 3 (KS3) domain. Residues Cys571, His706, and His745 each act as for beta-ketoacyl synthase activity in the active site. The segment at 926–1216 (FGGQMSTFVG…AMARRSLDSN (291 aa)) is malonyl-CoA:ACP transacylase (MAT). Positions 1298–1442 (GPLFGLLTFV…GKLDLLSSSE (145 aa)) are N-terminal hotdog fold. The region spanning 1298–1618 (GPLFGLLTFV…YTRIPRHSMT (321 aa)) is the PKS/mFAS DH domain. The interval 1331–1616 (LVIPHIIART…IAYTRIPRHS (286 aa)) is product template (PT) domain. The active-site Proton acceptor; for dehydratase activity is the His1335. The tract at residues 1467-1618 (GDVSGLQGRS…YTRIPRHSMT (152 aa)) is C-terminal hotdog fold. The Proton donor; for dehydratase activity role is filled by Asp1524. In terms of domain architecture, Carrier spans 1658–1733 (DTLKQTVGQI…AFVRYISKVV (76 aa)). Ser1692 is subject to O-(pantetheine 4'-phosphoryl)serine. Residues 1737 to 1772 (DDLGTPSHSDNDSHVTGTTATPNSSSASSDTHHGNS) form a disordered region. Positions 1752–1765 (TGTTATPNSSSASS) are enriched in low complexity. Residues 1979–2150 (VEKVKDDFQG…GYGHVDWTDG (172 aa)) form a methyltransferase domain region. The NADPH-binding domain stretch occupies residues 2229-2530 (IVVVTGATGS…IPLGEWVRKV (302 aa)).

Requires pantetheine 4'-phosphate as cofactor.

The protein operates within mycotoxin biosynthesis. Non-reducing polyketide synthase; part of the satratoxin SC1 cluster involved in the biosynthesis of satratoxins, trichothecene mycotoxins that are associated with human food poisonings. Satratoxins are suggested to be made by products of multiple gene clusters (SC1, SC2 and SC3) that encode 21 proteins in all, including polyketide synthases, acetyltransferases, and other enzymes expected to modify the trichothecene skeleton. SC1 encodes 10 proteins, SAT1 to SAT10. The largest are SAT8, which encodes a putative polyketide synthase (PKS) with a conventional non-reducing architecture, and SAT10, a putative protein containing four ankyrin repeats and thus may be involved in protein scaffolding. The putative short-chain reductase SAT3 may assist the PKS in some capacity. SAT6 contains a secretory lipase domain and acts probably as a trichothecene esterase. SAT5 encodes a putative acetyltransferase, and so, with SAT6, may affect endogenous protection from toxicity. The probable transcription factor SAT9 may regulate the expression of the SC1 cluster. SC2 encodes proteins SAT11 to SAT16, the largest of which encodes the putative reducing PKS SAT13. SAT11 is a cytochrome P450 monooxygenase, while SAT14 and SAT16 are probable acetyltransferases. The SC2 cluster may be regulated by the transcription factor SAT15. SC3 is a small cluster that encodes 5 proteins, SAT17 to SAT21. SAT21 is a putative MFS-type transporter which may have a role in exporting secondary metabolites. The four other proteins putatively encoded in SC3 include the taurine hydroxylase-like protein SAT17, the O-methyltransferase SAT18, the acetyltransferase SAT19, and the Cys6-type zinc finger SAT20, the latter being probably involved in regulation of SC3 expression. This chain is Non-reducing polyketide synthase SAT8, found in Stachybotrys chartarum (strain CBS 109288 / IBT 7711) (Toxic black mold).